The chain runs to 340 residues: Phospho-N-acetylmuramoyl-pentapeptide-transferase (340 aa).

The next 9 helical transmembrane spans lie at 22–42 (VVVPFGLSALGSALLGSLLIP), 69–89 (TMGGISFLPVGLLVAGIWSGW), 95–115 (AVALLTLAYSFVGWLDDWLVI), 129–149 (LLLQVGVALGFCVYLAWQGIP), 156–176 (GIGTLSLGWLFWPLALFVLVG), 186–206 (GMDGLAAGVVAILLIGLGLLH), 209–229 (PELSVLAFTLSGACLGFLVHN), 235–257 (LFMGDTGSLGLGGALAGLALLGD), and 316–336 (VVGSFYGVTALLVGLGWAWWH).

Belongs to the glycosyltransferase 4 family. MraY subfamily. Mg(2+) is required as a cofactor.

Its subcellular location is the cell inner membrane. It catalyses the reaction UDP-N-acetyl-alpha-D-muramoyl-L-alanyl-gamma-D-glutamyl-meso-2,6-diaminopimeloyl-D-alanyl-D-alanine + di-trans,octa-cis-undecaprenyl phosphate = di-trans,octa-cis-undecaprenyl diphospho-N-acetyl-alpha-D-muramoyl-L-alanyl-D-glutamyl-meso-2,6-diaminopimeloyl-D-alanyl-D-alanine + UMP. It functions in the pathway cell wall biogenesis; peptidoglycan biosynthesis. In terms of biological role, catalyzes the initial step of the lipid cycle reactions in the biosynthesis of the cell wall peptidoglycan: transfers peptidoglycan precursor phospho-MurNAc-pentapeptide from UDP-MurNAc-pentapeptide onto the lipid carrier undecaprenyl phosphate, yielding undecaprenyl-pyrophosphoryl-MurNAc-pentapeptide, known as lipid I. In Synechococcus sp. (strain JA-2-3B'a(2-13)) (Cyanobacteria bacterium Yellowstone B-Prime), this protein is Phospho-N-acetylmuramoyl-pentapeptide-transferase.